The sequence spans 634 residues: Chaperone protein dnaK2 (634 aa).

Residue Thr197 is modified to Phosphothreonine; by autocatalysis. The span at 601–620 shows a compositional bias: low complexity; sequence SAEASANAQAGPSSSSSSSS. Residues 601 to 634 are disordered; sequence SAEASANAQAGPSSSSSSSSGDDDVIDAEFSESK. The span at 621–634 shows a compositional bias: acidic residues; it reads GDDDVIDAEFSESK.

It belongs to the heat shock protein 70 family.

In terms of biological role, acts as a chaperone. In Synechococcus elongatus (strain ATCC 33912 / PCC 7942 / FACHB-805) (Anacystis nidulans R2), this protein is Chaperone protein dnaK2 (dnaK2).